Consider the following 558-residue polypeptide: Alkaline/neutral invertase CINV2 (558 aa).

Residues S16, S19, and S50 each carry the phosphoserine modification. T79 is modified (phosphothreonine). S555 is subject to Phosphoserine.

It belongs to the glycosyl hydrolase 100 family.

The protein resides in the cytoplasm. Its subcellular location is the cytosol. It catalyses the reaction Hydrolysis of terminal non-reducing beta-D-fructofuranoside residues in beta-D-fructofuranosides.. Functionally, cytosolic invertase that may cleave sucrose into glucose and fructose, and that is involved in the regulation of root growth. May regulate sugar-mediated root development by controlling sucrose catabolism in root cells. The protein is Alkaline/neutral invertase CINV2 of Arabidopsis thaliana (Mouse-ear cress).